Here is a 156-residue protein sequence, read N- to C-terminus: Ribosomal RNA large subunit methyltransferase H (156 aa).

S-adenosyl-L-methionine contacts are provided by residues leucine 73, glycine 104, and 123–128 (ISSMTL).

It belongs to the RNA methyltransferase RlmH family. In terms of assembly, homodimer.

Its subcellular location is the cytoplasm. The enzyme catalyses pseudouridine(1915) in 23S rRNA + S-adenosyl-L-methionine = N(3)-methylpseudouridine(1915) in 23S rRNA + S-adenosyl-L-homocysteine + H(+). Its function is as follows. Specifically methylates the pseudouridine at position 1915 (m3Psi1915) in 23S rRNA. The sequence is that of Ribosomal RNA large subunit methyltransferase H from Burkholderia ambifaria (strain MC40-6).